The following is a 201-amino-acid chain: Large ribosomal subunit protein uL4 (201 aa).

The disordered stretch occupies residues 44–68; sequence KAQKTRSEVAGTTKKSKKQKGGGAR.

This sequence belongs to the universal ribosomal protein uL4 family. Part of the 50S ribosomal subunit.

In terms of biological role, one of the primary rRNA binding proteins, this protein initially binds near the 5'-end of the 23S rRNA. It is important during the early stages of 50S assembly. It makes multiple contacts with different domains of the 23S rRNA in the assembled 50S subunit and ribosome. Its function is as follows. Forms part of the polypeptide exit tunnel. The chain is Large ribosomal subunit protein uL4 from Xanthomonas oryzae pv. oryzae (strain MAFF 311018).